The sequence spans 124 residues: Putative outer membrane protein TC_0858 (124 aa).

The first 31 residues, 1 to 31 (MGKTKKRKQSITLIEMMVVITLIGIISGALA), serve as a signal peptide directing secretion.

The protein resides in the cell outer membrane. The protein is Putative outer membrane protein TC_0858 of Chlamydia muridarum (strain MoPn / Nigg).